A 301-amino-acid polypeptide reads, in one-letter code: NAD kinase (301 aa).

The Proton acceptor role is filled by Asp-81. NAD(+) contacts are provided by residues 81 to 82 (DG), 155 to 156 (NE), His-166, Arg-183, Asp-185, 196 to 201 (TAYSLS), and Gln-256.

This sequence belongs to the NAD kinase family. The cofactor is a divalent metal cation.

It localises to the cytoplasm. It carries out the reaction NAD(+) + ATP = ADP + NADP(+) + H(+). In terms of biological role, involved in the regulation of the intracellular balance of NAD and NADP, and is a key enzyme in the biosynthesis of NADP. Catalyzes specifically the phosphorylation on 2'-hydroxyl of the adenosine moiety of NAD to yield NADP. The chain is NAD kinase from Mannheimia succiniciproducens (strain KCTC 0769BP / MBEL55E).